Here is a 265-residue protein sequence, read N- to C-terminus: MKLTAIFPLLFTAVGYCAAQSIADLAAANLSTEDSKSAQLISADSSDDASDSSVESVDAASSDVSGSSVESVDVSGSSLESVDVSGSSLESVDDSSEDSEEEELRILSSKKSGSYYSYGTKKSGSYSGYSTKKSASRRILSSKKSGSYSGYSTKKSGSRRILSSKKSGSYSGSKGSKRRILSSKKSGSYSGSKGSKRRNLSSKKSGSYSGSKGSKRRILSSKKSGSYSGSKGSKRRNLSSKKSGSYSGSKGSKRRILSGGLRGSM.

The N-terminal stretch at 1–19 is a signal peptide; the sequence is MKLTAIFPLLFTAVGYCAA. Residues 20 to 107 constitute a propeptide, acidic; sequence QSIADLAAAN…DSEEEELRIL (88 aa). The segment at 37–106 is disordered; it reads SAQLISADSS…EDSEEEELRI (70 aa). Over residues 51 to 90 the composition is skewed to low complexity; it reads DSSVESVDAASSDVSGSSVESVDVSGSSLESVDVSGSSLE. Acidic residues predominate over residues 91–103; sequence SVDDSSEDSEEEE. The R1; atypical repeat unit spans residues 108-140; the sequence is SSKKSGSYYSYGTKKSGSYSGYSTKKSASRRIL. The segment at 108-257 is 7 X 19 AA repeat of S-S-K-K-S-G-S-Y-S-G-S-K-G-S-K-R-R-[IL]-L; the sequence is SSKKSGSYYS…GSKGSKRRIL (150 aa). K110 carries the N6-poly(methylaminopropyl)lysine modification. The residue at position 111 (K111) is an N6,N6-dimethyllysine. Residues 122–133 show a composition bias toward low complexity; that stretch reads KSGSYSGYSTKK. The disordered stretch occupies residues 122 to 265; sequence KSGSYSGYST…ILSGGLRGSM (144 aa). Residues 137-140 constitute a propeptide that is removed on maturation; the sequence is RRIL. Residues 141-162 form an R2; atypical repeat; it reads SSKKSGSYSGYSTKKSGSRRIL. The span at 142 to 155 shows a compositional bias: low complexity; sequence SKKSGSYSGYSTKK. N6-poly(methylaminopropyl)lysine is present on K143. The residue at position 144 (K144) is an N6,N6-dimethyllysine. K154 is modified (N6-poly(methylaminopropyl)lysine). N6,N6-dimethyllysine is present on K155. Positions 159–162 are excised as a propeptide; the sequence is RRIL. Residues S163 and S164 each carry the phosphoserine modification. Residues 163 to 181 form an R3 repeat; that stretch reads SSKKSGSYSGSKGSKRRIL. Over residues 164 to 174 the composition is skewed to low complexity; it reads SKKSGSYSGSK. An N6-poly(methylaminopropyl)lysine modification is found at K165. K166 is modified (N6,N6-dimethyllysine). S167, S169, S171, and S173 each carry phosphoserine. K174 is subject to N6,N6,N6-trimethyl-5-hydroxylysine. A Phosphoserine modification is found at S176. Residue K177 is modified to N6-poly(methylaminopropyl)lysine. Residues 178–181 constitute a propeptide that is removed on maturation; sequence RRIL. S182 and S183 each carry phosphoserine. The stretch at 182–200 is one R4 repeat; the sequence is SSKKSGSYSGSKGSKRRNL. A compositionally biased stretch (low complexity) spans 183 to 193; the sequence is SKKSGSYSGSK. K184 is modified (N6-poly(methylaminopropyl)lysine). K185 carries the post-translational modification N6,N6-dimethyllysine. 4 positions are modified to phosphoserine: S186, S188, S190, and S192. K193 carries the post-translational modification N6,N6,N6-trimethyl-5-hydroxylysine. At S195 the chain carries Phosphoserine. K196 carries the post-translational modification N6-poly(methylaminopropyl)lysine. Positions 197-200 are excised as a propeptide; sequence RRNL. Phosphoserine is present on residues S201 and S202. The stretch at 201-219 is one R5 repeat; sequence SSKKSGSYSGSKGSKRRIL. Residues 202 to 212 show a composition bias toward low complexity; the sequence is SKKSGSYSGSK. K203 carries the post-translational modification N6-poly(methylaminopropyl)lysine. K204 is modified (N6,N6-dimethyllysine). 4 positions are modified to phosphoserine: S205, S207, S209, and S211. K212 is subject to N6,N6,N6-trimethyl-5-hydroxylysine. S214 is modified (phosphoserine). K215 carries the N6-poly(methylaminopropyl)lysine modification. The propeptide occupies 216-219; the sequence is RRIL. S220 and S221 each carry phosphoserine. The stretch at 220 to 238 is one R6 repeat; the sequence is SSKKSGSYSGSKGSKRRNL. The span at 221–231 shows a compositional bias: low complexity; sequence SKKSGSYSGSK. K222 carries the N6-poly(methylaminopropyl)lysine modification. The residue at position 223 (K223) is an N6,N6-dimethyllysine. Residues S224, S226, S228, and S230 each carry the phosphoserine modification. K231 is modified (N6,N6,N6-trimethyl-5-hydroxylysine). S233 carries the post-translational modification Phosphoserine. Position 234 is an N6-poly(methylaminopropyl)lysine (K234). The propeptide occupies 235 to 238; it reads RRNL. 2 positions are modified to phosphoserine: S239 and S240. An R7 repeat occupies 239-257; the sequence is SSKKSGSYSGSKGSKRRIL. Over residues 240-250 the composition is skewed to low complexity; that stretch reads SKKSGSYSGSK. N6-poly(methylaminopropyl)lysine is present on K241. Position 242 is an N6,N6-dimethyllysine (K242). 4 positions are modified to phosphoserine: S243, S245, S247, and S249. K250 carries the N6,N6,N6-trimethyl-5-hydroxylysine modification. The residue at position 252 (S252) is a Phosphoserine. K253 is modified (N6-poly(methylaminopropyl)lysine). Positions 254 to 265 are excised as a propeptide; that stretch reads RRILSGGLRGSM.

As to quaternary structure, silaffin-1A peptides form large aggregates via electrostatic interactions due to intermolecular interactions between the negatively charged phosphate groups and the polyamine moieties. Post-translationally, N6-polymethylaminopropylated. Two lysine residues of each peptide bears 6 to 11 repeats of methyl-propylamine, which gives a possible template for nucleation, and may also control the silica colloid size within the silica deposition vesicle (SDV). In terms of processing, phosphorylated. All serine residues of the Silaffin-1A1 peptide are phosphorylated. Only minor amounts of the Silaffin-1A2 peptide are phosphorylated. Phosphorylation is essential for the activity. It may represent a source of anions required for silica formation of diatoms.

Its function is as follows. Catalyzes the polymerization of silica spheres from a silicilic acid solution. It therefore plays a central role in the formation of silica cell wall of diatoms. This Cylindrotheca fusiformis (Marine diatom) protein is Silaffin-1 (SIL1).